The primary structure comprises 296 residues: Iron-sulfur cluster carrier protein (296 aa).

A compositionally biased stretch (low complexity) spans methionine 1–arginine 17. The tract at residues methionine 1–arginine 23 is disordered. Glycine 52–serine 59 is an ATP binding site.

The protein belongs to the Mrp/NBP35 ATP-binding proteins family. Homodimer.

Functionally, binds and transfers iron-sulfur (Fe-S) clusters to target apoproteins. Can hydrolyze ATP. The protein is Iron-sulfur cluster carrier protein of Saccharolobus solfataricus (strain ATCC 35092 / DSM 1617 / JCM 11322 / P2) (Sulfolobus solfataricus).